The chain runs to 98 residues: NADH-ubiquinone oxidoreductase chain 4L (98 aa).

Helical transmembrane passes span 1 to 21 (MPSI…GTLI), 26 to 46 (LMSS…LTSL), and 61 to 81 (IILL…LVMV).

It belongs to the complex I subunit 4L family. Core subunit of respiratory chain NADH dehydrogenase (Complex I) which is composed of 45 different subunits.

Its subcellular location is the mitochondrion inner membrane. It carries out the reaction a ubiquinone + NADH + 5 H(+)(in) = a ubiquinol + NAD(+) + 4 H(+)(out). Core subunit of the mitochondrial membrane respiratory chain NADH dehydrogenase (Complex I) which catalyzes electron transfer from NADH through the respiratory chain, using ubiquinone as an electron acceptor. Part of the enzyme membrane arm which is embedded in the lipid bilayer and involved in proton translocation. In Otolemur crassicaudatus (Brown greater galago), this protein is NADH-ubiquinone oxidoreductase chain 4L (MT-ND4L).